A 132-amino-acid chain; its full sequence is Small ribosomal subunit protein uS8 (132 aa).

The protein belongs to the universal ribosomal protein uS8 family. Part of the 30S ribosomal subunit. Contacts proteins S5 and S12.

Its function is as follows. One of the primary rRNA binding proteins, it binds directly to 16S rRNA central domain where it helps coordinate assembly of the platform of the 30S subunit. This is Small ribosomal subunit protein uS8 from Geobacillus thermodenitrificans (strain NG80-2).